Here is a 286-residue protein sequence, read N- to C-terminus: Beta-lactamase TEM (286 aa).

A signal peptide spans 1 to 23 (MSIQHFRVALIPFFAAFCLPVFA). Serine 68 functions as the Acyl-ester intermediate in the catalytic mechanism. A disulfide bridge links cysteine 75 with cysteine 121. Glutamate 166 acts as the Proton acceptor in catalysis. Residue 232–234 (KSG) coordinates substrate.

It belongs to the class-A beta-lactamase family.

It carries out the reaction a beta-lactam + H2O = a substituted beta-amino acid. Its function is as follows. TEM-type are the most prevalent beta-lactamases in enterobacteria; they hydrolyze the beta-lactam bond in susceptible beta-lactam antibiotics, thus conferring resistance to penicillins and cephalosporins. TEM-3 and TEM-4 are capable of hydrolyzing cefotaxime and ceftazidime. TEM-5 is capable of hydrolyzing ceftazidime. TEM-6 is capable of hydrolyzing ceftazidime and aztreonam. TEM-8/CAZ-2, TEM-16/CAZ-7 and TEM-24/CAZ-6 are markedly active against ceftazidime. IRT-4 shows resistance to beta-lactamase inhibitors. The chain is Beta-lactamase TEM (bla) from Escherichia coli.